The primary structure comprises 1342 residues: MLNIIYVVSLILIKFIFYKECNNNNNYYLSNIELYNYKLRKRNRILNNNINDRKSFLSDLEQNYKPLFDIYELSANFEKRRKELEKKTKGEENEIEKKKENDLEEKKENEIEKKKENDLEKEYNDVINLLELSLSSEYKELNADVSNNDNSGHEENNKHKLNKKNSSNYKNDKSLDELIKGAILKLKQNPNIKNKNMLDYDKIFKIIKEKLINKNLASNKIKGGDNEKLKEEKKQSDISTNVEVKKDIINDQLNKGIPTKIENKDDMINKESNKEDITNEGKSNSLNNLNTLNNDGNIITKVYDHYTIVTNSNDILNDISIDASDISKNSIGGINIPFNENDNSSFTHQRYIVLSNNGEKKYKIVLMTKNPKFMDMDGIYDEEEKKESLIELNQKVNKEENTNLYDGTGTLYYGKKSKKEKENTQQKGGNNPNVDINILNNNNNNNNNNNNNSNNNSNSMNDEEINYNNNNNKESPSMFRRFINFLSFSGNENETEDTLIYHNKNDNSYKNKKEGTGKNNDNNDPNNNNNKKILLNVDKLVDQYLLNLKNNHTSKQELILVLKGELDLHSKNMKNVINNAKKNLEKYFKEHFKEFDKISYDISTPINFLCIFIPTLFDMNNMDLLKQALLILHNDLHEYVENWSFSSTYHTYEADYIKEQDSVYDRSPKKKYIKASKKLYNNKYSFLNKFLNIEPLILFAKKLNSKRSNIEKEILNFLPKELRDYSTWNLSIIRVFNAWFLAGYGNKNVKVCVVDSGADIKHVDLNGNLYIPEYNEKYEMTQDFYNFMVKNPTDASGHGTHVTGIIGGVANDLGVVGVAPNITLISLRFIDGKKYGGSFHAIKALNVCILNKAPIINASWGSSHFDVNLHLAVERLKYTLNGKGSVLIAASGNKSNDNDISPLYPATFTFPHVYSVASISRNFEISPFSNYGHKSVHILAPGHHIYSTIPNNSYKIFTGTSMAAPHVCGVSALVYSVCYNQGFIPQAEEVLDILTRTSIKIISTKKRTINDSLVNAEGAVLTTLLGGLWMQMDCYFVKFNLEKGKKKHIPVVFSAYKKGVYETDIVIAIIPIDGKSKIYGEIHIPIKIVTDVNIPNFQESPRRGKNYTIDSNEAQHDEVLSYICENALYNLYEYDSHYLLASVILFFLALLSIFVGMIYMKSRKHSDKKCSKNLMKSNYIPEMDDGMEETQQLQQERRQYFRELFGENLEKNYDQHFVQDFGQDFRQDFKLGSTPDLKQYSDIDLQNKIQQPERKTVKIIINNFEDRKKETKRRLLKGLNYDGENAKKHDFTNESISNSRKNFKFSNNTEMKKNTIKSEDVKIASDDNVNKAMNQLDDMFMK.

A signal peptide spans 1–18 (MLNIIYVVSLILIKFIFY). Positions 19-687 (KECNNNNNYY…KLYNNKYSFL (669 aa)) are cleaved as a propeptide — inhibition peptide. 2 disordered regions span residues 85-111 (EKKT…ENEI) and 143-171 (ADVS…NYKN). 5 N-linked (GlcNAc...) asparagine glycosylation sites follow: Asn165, Asn343, Asn451, Asn455, and Asn493. Residues 415–474 (KKSKKEKENTQQKGGNNPNVDINILNNNNNNNNNNNNNSNNNSNSMNDEEINYNNNNNKE) form a disordered region. A compositionally biased stretch (low complexity) spans 430-474 (NNPNVDINILNNNNNNNNNNNNNSNNNSNSMNDEEINYNNNNNKE). Residues 500 to 531 (IYHNKNDNSYKNKKEGTGKNNDNNDPNNNNNK) are disordered. A compositionally biased stretch (basic and acidic residues) spans 503–516 (NKNDNSYKNKKEGT). Over residues 518 to 531 (KNNDNNDPNNNNNK) the composition is skewed to low complexity. Asn551, Asn642, and Asn729 each carry an N-linked (GlcNAc...) asparagine glycan. Topologically, residues 688–1137 (NKFLNIEPLI…LYNLYEYDSH (450 aa)) are extracellular. Residues 727–1020 (TWNLSIIRVF…DSLVNAEGAV (294 aa)) form the Peptidase S8 domain. Catalysis depends on charge relay system residues Asp755 and His798. N-linked (GlcNAc...) asparagine glycans are attached at residues Asn821, Asn857, Asn893, and Asn951. The active-site Charge relay system is the Ser961. 2 N-linked (GlcNAc...) asparagine glycosylation sites follow: Asn1010 and Asn1106. Residues 1138 to 1158 (YLLASVILFFLALLSIFVGMI) traverse the membrane as a helical segment. At 1159–1342 (YMKSRKHSDK…MNQLDDMFMK (184 aa)) the chain is on the cytoplasmic side.

Belongs to the peptidase S8 family. Post-translationally, proteolytically cleaved at the N-terminus to generate a 74kDa intermediate which is further processed into a 72kDa form. The first maturation cleavage is autocatalytic, occurs in the ER and is necessary for the subsequent SUB2 trafficking to the microneme. The second cleavage may be mediated by PMX/plasmepsin X.

The protein localises to the cell membrane. It is found in the cytoplasmic vesicle. The protein resides in the secretory vesicle. It localises to the microneme membrane. It carries out the reaction Hydrolysis of proteins with broad specificity for peptide bonds, and a preference for a large uncharged residue in P1. Hydrolyzes peptide amides.. Its activity is regulated as follows. Activation may be calcium-dependent. Inhibited by the non-covalent interaction with the cleaved propeptide. Functionally, serine protease which plays an essential role in the shedding of AMA1, MSP1 and MSP7 from the surface of the invading merozoite; this step is essential for productive invasion and the release of the adhesion between the erythrocyte and the merozoite. May cleave TRAMP/PTTRAMP, thereby shedding TRAMP from the merozoite surface during erythrocyte invasion. This Plasmodium falciparum protein is Subtilisin-like protease 2.